A 371-amino-acid chain; its full sequence is 3-isopropylmalate dehydrogenase B (371 aa).

Residue G79–E93 participates in NAD(+) binding. Substrate-binding residues include R100, R110, R142, and D229. Mg(2+) is bound by residues D229, D254, and D258. G296–N308 contacts NAD(+).

It belongs to the isocitrate and isopropylmalate dehydrogenases family. As to quaternary structure, homodimer. It depends on Mg(2+) as a cofactor. The cofactor is Mn(2+).

It localises to the cytoplasm. The catalysed reaction is (2R,3S)-3-isopropylmalate + NAD(+) = 4-methyl-2-oxopentanoate + CO2 + NADH. The protein operates within amino-acid biosynthesis; L-leucine biosynthesis; L-leucine from 3-methyl-2-oxobutanoate: step 3/4. In terms of biological role, catalyzes the oxidation of 3-carboxy-2-hydroxy-4-methylpentanoate (3-isopropylmalate) to 3-carboxy-4-methyl-2-oxopentanoate. The product decarboxylates to 4-methyl-2 oxopentanoate. In Aspergillus niger, this protein is 3-isopropylmalate dehydrogenase B (leu2B).